Consider the following 140-residue polypeptide: Sec-independent protein translocase protein TatB (140 aa).

Residues 2-22 form a helical membrane-spanning segment; it reads LPGIGFSELLLIGLAALIIIG. The segment at 90-140 is disordered; sequence VNSAVMREHPVSPPPPATPPAPPAELPPEAAPHADSQNAPPEADPAKGDRT. Positions 100-119 are enriched in pro residues; it reads VSPPPPATPPAPPAELPPEA.

This sequence belongs to the TatB family. As to quaternary structure, the Tat system comprises two distinct complexes: a TatABC complex, containing multiple copies of TatA, TatB and TatC subunits, and a separate TatA complex, containing only TatA subunits. Substrates initially bind to the TatABC complex, which probably triggers association of the separate TatA complex to form the active translocon.

The protein resides in the cell inner membrane. Its function is as follows. Part of the twin-arginine translocation (Tat) system that transports large folded proteins containing a characteristic twin-arginine motif in their signal peptide across membranes. Together with TatC, TatB is part of a receptor directly interacting with Tat signal peptides. TatB may form an oligomeric binding site that transiently accommodates folded Tat precursor proteins before their translocation. This Hyphomonas neptunium (strain ATCC 15444) protein is Sec-independent protein translocase protein TatB.